The sequence spans 278 residues: Putative protein-disulfide oxidoreductase RF_0032 (278 aa).

Positions 1-18 (MRSIFIVPIFLLFLSSCS) are cleaved as a signal peptide. The tract at residues 62–84 (VPANDNNQTDEVSTPPSQEQKNP) is disordered. Over residues 65 to 81 (NDNNQTDEVSTPPSQEQ) the composition is skewed to polar residues. One can recognise a Thioredoxin domain in the interval 77-266 (PSQEQKNPEI…ISTAVDKALE (190 aa)). Cysteines 119 and 122 form a disulfide.

The protein belongs to the thioredoxin family. DsbA subfamily.

It localises to the periplasm. In terms of biological role, may be required for disulfide bond formation in some proteins. This chain is Putative protein-disulfide oxidoreductase RF_0032, found in Rickettsia felis (strain ATCC VR-1525 / URRWXCal2) (Rickettsia azadi).